A 148-amino-acid polypeptide reads, in one-letter code: 3-dehydroquinate dehydratase (148 aa).

Y24 acts as the Proton acceptor in catalysis. N75, H81, and D88 together coordinate substrate. The Proton donor role is filled by H101. Substrate contacts are provided by residues 102-103 (LS) and R112.

This sequence belongs to the type-II 3-dehydroquinase family. Homododecamer.

The enzyme catalyses 3-dehydroquinate = 3-dehydroshikimate + H2O. Its pathway is metabolic intermediate biosynthesis; chorismate biosynthesis; chorismate from D-erythrose 4-phosphate and phosphoenolpyruvate: step 3/7. Its function is as follows. Catalyzes a trans-dehydration via an enolate intermediate. In Sinorhizobium medicae (strain WSM419) (Ensifer medicae), this protein is 3-dehydroquinate dehydratase.